The primary structure comprises 498 residues: Na(+)/H(+) exchange regulatory cofactor NHE-RF4 (498 aa).

PDZ domains lie at 49-130, 157-235, 263-346, and 394-475; these read FCLL…LAQH, LCHV…AGLE, CLNI…VDPE, and QCFL…GARN. A Phosphoserine modification is found at S329.

As to quaternary structure, interacts with the C-terminal region of GUCY2C. Interacts with C-terminal region of SLC9A3 and the interactions decrease in response to elevated calcium ion levels. Interacts with the C-terminal region of SLC34A1. Interacts with USP2 isoform 2. Interacts (via the third PDZ domain) with SLC26A3 (via PDZ-binding motif). This interaction leads to decreased expression of SLC26A3 on the cell membrane resulting in its reduced exchanger activity. In terms of processing, phosphorylation at Ser-329 negatively regulates its interaction with SLC26A3. Expressed in kidney and small intestine. Not detected in heart, brain, spleen, lung, liver, skeletal muscle or testis.

It localises to the cell membrane. Its subcellular location is the cytoplasm. In terms of biological role, acts as a regulatory protein that associates with GUCY2C and negatively modulates its heat-stable enterotoxin-mediated activation. Stimulates SLC9A3 activity in the presence of elevated calcium ions. This is Na(+)/H(+) exchange regulatory cofactor NHE-RF4 (Nherf4) from Mus musculus (Mouse).